An 81-amino-acid chain; its full sequence is Small serum protein 4 (81 aa).

The signal sequence occupies residues 1 to 19 (MKVFFILIIFSFTLATCQG). 3 cysteine pairs are disulfide-bonded: Cys21–Cys74, Cys41–Cys66, and Cys64–Cys73.

This sequence belongs to the beta-microseminoprotein family.

Its subcellular location is the secreted. Shows an slight inhibitory effect toward the metalloproteinase brevilysin H6, but does not inhibit the metalloproteinases thermolysin, HR1A and HR1B. This Protobothrops flavoviridis (Habu) protein is Small serum protein 4.